The following is a 100-amino-acid chain: UPF0213 protein YhbQ (100 aa).

Positions 2–77 constitute a GIY-YIG domain; the sequence is TPWYLYLIRT…KQLTKRQKER (76 aa).

It belongs to the UPF0213 family.

In Salmonella choleraesuis (strain SC-B67), this protein is UPF0213 protein YhbQ.